Consider the following 500-residue polypeptide: Polyenoic fatty acid isomerase (500 aa).

Residues 1–21 form the signal peptide; the sequence is MSLNRVLHIFLIAYLACTALT.

Homodimer. It depends on an oxidized flavin as a cofactor. Post-translationally, glycosylated.

The enzyme catalyses (5Z,8Z,11Z,14Z,17Z)-eicosapentaenoate = (5Z,7E,9E,14Z,17Z)-icosapentaenoate. Its function is as follows. Involved in the biosynthesis of conjugated triene-containing fatty acids. Catalyzes the isomerization of a wide range of substrates containing three or more methylene interrupted olefins into a Z,E,E conjugated triene functionality. May be involved in a stress tolerance mechanism as response to intertidal habitats with direct sunlight, desiccation and high temperature. In vitro substrates include arachidonic acid ((5Z,8Z,11Z,14Z)-eicosatetraenoic acid), EPA ((5Z,8Z, 11Z,14Z,17Z)-eicosapentaenoic acid), DHA ((4Z,7Z,10Z,13Z,16Z,19Z)-docosahexenoic acid), adrenic acid ((7Z,10Z,13Z,16Z)-docosatetraenoic acid), anandamide (arachidonyl-N-ethanolamide) and eicosatrienoic acid ((5Z,8Z,11Z)-eicosatrienoic acid). Gamma-linolenic acid (18:3 6Z,9Z,12Z) and dihomo-gamma-linolenic acid (20:3 8Z,11Z,14Z) are transformed into mixtures of conjugated diene and triene fatty acids, linoleic acid is only transformed to a conjugated diene. The sequence is that of Polyenoic fatty acid isomerase from Ptilota filicina (Red alga).